The chain runs to 221 residues: Small ribosomal subunit protein uS3c (221 aa).

The region spanning I43–A121 is the KH type-2 domain.

It belongs to the universal ribosomal protein uS3 family. Part of the 30S ribosomal subunit.

Its subcellular location is the plastid. It is found in the chloroplast. The protein is Small ribosomal subunit protein uS3c (rps3) of Jasminum nudiflorum (Winter jasmine).